Consider the following 61-residue polypeptide: Lens epithelial cell protein LEP503 (61 aa).

In terms of tissue distribution, restricted to lens epithelial cells.

In terms of biological role, may play a role in lens epithelial cell differentiation. This chain is Lens epithelial cell protein LEP503 (LENEP), found in Homo sapiens (Human).